An 86-amino-acid polypeptide reads, in one-letter code: UPF0291 protein LBA1279 (86 aa).

2 stretches are compositionally biased toward basic and acidic residues: residues 1–27 and 65–75; these read MNKDAMSKEEKKVTDRINELYHKKENE and NGKEVTSEKAK. 2 disordered regions span residues 1 to 36 and 65 to 86; these read MNKDAMSKEEKKVTDRINELYHKKENEGLTPEEEEE and NGKEVTSEKAKQAQRKKGLRKD. The span at 76-86 shows a compositional bias: basic residues; that stretch reads QAQRKKGLRKD.

It belongs to the UPF0291 family.

The protein resides in the cytoplasm. In Lactobacillus acidophilus (strain ATCC 700396 / NCK56 / N2 / NCFM), this protein is UPF0291 protein LBA1279.